Reading from the N-terminus, the 258-residue chain is Methylthioribulose-1-phosphate dehydratase (258 aa).

Positions 1-20 are enriched in polar residues; that stretch reads MTPPSNGQAAETNDHLVQSD. The disordered stretch occupies residues 1 to 21; the sequence is MTPPSNGQAAETNDHLVQSDN. Cys-105 is a substrate binding site. Zn(2+) is bound by residues His-123 and His-125. The active-site Proton donor/acceptor is Glu-153. His-210 provides a ligand contact to Zn(2+).

The protein belongs to the aldolase class II family. MtnB subfamily. Zn(2+) serves as cofactor.

The protein resides in the cytoplasm. The catalysed reaction is 5-(methylsulfanyl)-D-ribulose 1-phosphate = 5-methylsulfanyl-2,3-dioxopentyl phosphate + H2O. Its pathway is amino-acid biosynthesis; L-methionine biosynthesis via salvage pathway; L-methionine from S-methyl-5-thio-alpha-D-ribose 1-phosphate: step 2/6. Catalyzes the dehydration of methylthioribulose-1-phosphate (MTRu-1-P) into 2,3-diketo-5-methylthiopentyl-1-phosphate (DK-MTP-1-P). This Chaetomium globosum (strain ATCC 6205 / CBS 148.51 / DSM 1962 / NBRC 6347 / NRRL 1970) (Soil fungus) protein is Methylthioribulose-1-phosphate dehydratase.